The following is a 332-amino-acid chain: Phenylalanine--tRNA ligase alpha subunit (332 aa).

Position 252 (Glu252) interacts with Mg(2+).

It belongs to the class-II aminoacyl-tRNA synthetase family. Phe-tRNA synthetase alpha subunit type 1 subfamily. As to quaternary structure, tetramer of two alpha and two beta subunits. Mg(2+) serves as cofactor.

The protein resides in the cytoplasm. It carries out the reaction tRNA(Phe) + L-phenylalanine + ATP = L-phenylalanyl-tRNA(Phe) + AMP + diphosphate + H(+). This chain is Phenylalanine--tRNA ligase alpha subunit, found in Marinobacter nauticus (strain ATCC 700491 / DSM 11845 / VT8) (Marinobacter aquaeolei).